The following is a 385-amino-acid chain: Actin-2 (385 aa).

Belongs to the actin family. ARP1 subfamily.

It is found in the cytoplasm. The protein localises to the cytoskeleton. This is Actin-2 from Pneumocystis carinii.